Reading from the N-terminus, the 453-residue chain is Phosphoglucosamine mutase (453 aa).

Ser-100 functions as the Phosphoserine intermediate in the catalytic mechanism. Mg(2+)-binding residues include Ser-100, Asp-239, Asp-241, and Asp-243. Ser-100 carries the phosphoserine modification.

Belongs to the phosphohexose mutase family. Mg(2+) serves as cofactor. Activated by phosphorylation.

It catalyses the reaction alpha-D-glucosamine 1-phosphate = D-glucosamine 6-phosphate. Catalyzes the conversion of glucosamine-6-phosphate to glucosamine-1-phosphate. The sequence is that of Phosphoglucosamine mutase from Buchnera aphidicola subsp. Baizongia pistaciae (strain Bp).